The chain runs to 123 residues: Small ribosomal subunit protein bS16 (123 aa).

Belongs to the bacterial ribosomal protein bS16 family.

This is Small ribosomal subunit protein bS16 from Treponema pallidum (strain Nichols).